The chain runs to 160 residues: Small ribosomal subunit protein uS7 (160 aa).

This sequence belongs to the universal ribosomal protein uS7 family. In terms of assembly, part of the 30S ribosomal subunit. Contacts proteins S9 and S11.

In terms of biological role, one of the primary rRNA binding proteins, it binds directly to 16S rRNA where it nucleates assembly of the head domain of the 30S subunit. Is located at the subunit interface close to the decoding center, probably blocks exit of the E-site tRNA. The protein is Small ribosomal subunit protein uS7 of Anaplasma marginale (strain Florida).